A 212-amino-acid polypeptide reads, in one-letter code: Probable GTP-binding protein EngB (212 aa).

Positions G22–I212 constitute an EngB-type G domain. GTP-binding positions include G30–S37, G57–E61, D95–G98, T162–D165, and I192–A195. Residues S37 and T59 each contribute to the Mg(2+) site.

This sequence belongs to the TRAFAC class TrmE-Era-EngA-EngB-Septin-like GTPase superfamily. EngB GTPase family. Mg(2+) is required as a cofactor.

In terms of biological role, necessary for normal cell division and for the maintenance of normal septation. The chain is Probable GTP-binding protein EngB from Treponema denticola (strain ATCC 35405 / DSM 14222 / CIP 103919 / JCM 8153 / KCTC 15104).